The sequence spans 131 residues: MVKNSEHLPWYLGSDSATAASTATDATSADGAASETDAASATDTTSATDPTSATDPIATTNTTGITSSGPTTNGRRGRPYISTPPNRCYDCGRTRSPYWRKGTYNGQVVHLCNACGLNHIKIAKKSSAIFL.

Over residues 21 to 55 the composition is skewed to low complexity; the sequence is STATDATSADGAASETDAASATDTTSATDPTSATD. Positions 21 to 85 are disordered; sequence STATDATSAD…RGRPYISTPP (65 aa). The span at 57 to 74 shows a compositional bias: polar residues; the sequence is IATTNTTGITSSGPTTNG. A GATA-type zinc finger spans residues 88–115; sequence CYDCGRTRSPYWRKGTYNGQVVHLCNAC.

This chain is GATA zinc finger domain-containing protein 2 (comH), found in Dictyostelium discoideum (Social amoeba).